The primary structure comprises 391 residues: Histidinol-phosphate aminotransferase (391 aa).

Lysine 245 is subject to N6-(pyridoxal phosphate)lysine.

The protein belongs to the class-II pyridoxal-phosphate-dependent aminotransferase family. Histidinol-phosphate aminotransferase subfamily. Homodimer. Pyridoxal 5'-phosphate serves as cofactor.

The enzyme catalyses L-histidinol phosphate + 2-oxoglutarate = 3-(imidazol-4-yl)-2-oxopropyl phosphate + L-glutamate. It participates in amino-acid biosynthesis; L-histidine biosynthesis; L-histidine from 5-phospho-alpha-D-ribose 1-diphosphate: step 7/9. In Bifidobacterium adolescentis (strain ATCC 15703 / DSM 20083 / NCTC 11814 / E194a), this protein is Histidinol-phosphate aminotransferase.